A 748-amino-acid polypeptide reads, in one-letter code: Structure-specific endonuclease subunit SLX4 (748 aa).

Polar residues predominate over residues 62–75; sequence KSVTAQKSPMTQET. Positions 62 to 104 are disordered; it reads KSVTAQKSPMTQETTKNDTERNKDVDKSCNPVSTSHPDLGGSN. Residue Thr72 is modified to Phosphothreonine; by ATR and ATM. The span at 76–88 shows a compositional bias: basic and acidic residues; the sequence is TKNDTERNKDVDK. Thr113 carries the post-translational modification Phosphothreonine; by ATR and ATM. 2 disordered regions span residues 215–236 and 277–303; these read IKTQNEGNSDKPPRARNNKGEK and EKSSNSLDNQESSQQRLWTASQLPPEL. Residues 222-236 show a composition bias toward basic and acidic residues; it reads NSDKPPRARNNKGEK. Residues 277–298 are compositionally biased toward polar residues; it reads EKSSNSLDNQESSQQRLWTASQ. Phosphoserine; by ATR and ATM is present on Ser289. Phosphothreonine; by ATR and ATM is present on Thr319. Phosphoserine; by ATR and ATM occurs at positions 329 and 355. The span at 591–602 shows a compositional bias: polar residues; it reads ISTKDSTQNPTT. Positions 591–610 are disordered; the sequence is ISTKDSTQNPTTSNDIIDTS.

It belongs to the SLX4 family. In terms of assembly, forms a heterodimer with SLX1. Interacts with RAD1; catalytic subunit of the RAD1-RAD10 endonuclease. Interacts with RTT107. Phosphorylated by ATR (MEC1) and ATM (TEL1) upon DNA damage. This appears to be required for the function with the RAD1-RAD10 endonuclease.

It localises to the nucleus. The protein localises to the cytoplasm. In terms of biological role, regulatory subunit that interacts with and increases the activity of different structure-specific endonucleases. Has several distinct roles in protecting genome stability by resolving diverse forms of deleterious DNA structures. Component of the SLX1-SLX4 structure-specific endonuclease that resolves DNA secondary structures generated during DNA repair and recombination. Has endonuclease activity towards branched DNA substrates, introducing single-strand cuts in duplex DNA close to junctions with ss-DNA. Has a preference for simple Y, 5'-flap and replication fork-like structures. It cleaves the strand bearing the 5'-non-homologous arm at the branch site junction and generates ligatable, nicked products from the 5'-flap or replication fork substrates. Plays a critical role in maintaining the integrity of the ribosomal DNA (rDNA) loci, where it has a role in re-starting stalled replication forks. Has Holliday junction resolvase activity in vitro. Interacts with the structure-specific RAD1-RAD10 endonuclease and promotes RAD1-RAD10-dependent 3'-non-homologous tail removal (NHTR) during repair of double-strand breaks by single-strand annealing. SLX4 also promotes recovery from DNA-alkylation-induced replisome stalling during DNA replication by facilitating the error-free mode of lesion bypass. This does not require SLX1 or RAD1-RAD10, but probably RTT107. This is Structure-specific endonuclease subunit SLX4 from Saccharomyces cerevisiae (strain RM11-1a) (Baker's yeast).